A 228-amino-acid chain; its full sequence is Ankyrin repeat domain-containing protein 46 (228 aa).

4 ANK repeats span residues 11 to 40, 44 to 73, 77 to 103, and 107 to 138; these read QTSV…DPNI, RGRT…DLLA, QGNT…KIDI, and NGST…EVKG. A helical membrane pass occupies residues 195-215; it reads VLLLLVVIALLSLGIAYYVSG.

The protein localises to the membrane. The chain is Ankyrin repeat domain-containing protein 46 (ankrd46) from Danio rerio (Zebrafish).